A 326-amino-acid polypeptide reads, in one-letter code: NAD-dependent protein deacylase SIR5 (326 aa).

A mitochondrion-targeting transit peptide spans 1–26 (MRLLRPTPRLSSIFSSKTATSNLRFF). The Deacetylase sirtuin-type domain maps to 28–324 (AMAPHNDVGA…IGKLETDKKE (297 aa)). 53–72 (GAGLSASSGLPTFRGAGGLW) lines the NAD(+) pocket. 2 residues coordinate substrate: tyrosine 97 and arginine 100. Histidine 151 (proton acceptor) is an active-site residue. Zn(2+) is bound by residues cysteine 159, cysteine 162, cysteine 211, and cysteine 214.

It belongs to the sirtuin family. Class I subfamily. Interacts with LAT1; the interaction is direct. Requires Zn(2+) as cofactor.

The protein resides in the mitochondrion. It localises to the cytoplasm. The protein localises to the cytosol. Its subcellular location is the nucleus. It is found in the chromosome. The enzyme catalyses N(6)-acetyl-L-lysyl-[protein] + NAD(+) + H2O = 2''-O-acetyl-ADP-D-ribose + nicotinamide + L-lysyl-[protein]. It carries out the reaction N(6)-(2E)-butenoyl-L-lysyl-[protein] + H2O = (2E)-2-butenoate + L-lysyl-[protein]. NAD-dependent protein-lysine deacylase that decrotonylates the PDC (pyruvate dehydrogenase complex) subunit LAT1 at 'Lys-148' to inhibit PDC activity and consequently ATP production. Also decrotonylates histone H3 crotonylated at 'Lys-18' (H3K18cr), to repress the expression of genes involved in aerobic respiration. May also act as a NAD-dependent deacetylase. Does not mediate desuccinylation, demalonylation, or deglutarylation of LAT1. The sequence is that of NAD-dependent protein deacylase SIR5 from Fusarium oxysporum f. sp. lycopersici (strain 4287 / CBS 123668 / FGSC 9935 / NRRL 34936) (Fusarium vascular wilt of tomato).